We begin with the raw amino-acid sequence, 149 residues long: Heat shock protein beta-3 (149 aa).

The sHSP domain maps to 47-149; it reads KARAAQAPPV…VEVKDSAGTK (103 aa).

This sequence belongs to the small heat shock protein (HSP20) family.

It localises to the cytoplasm. Its subcellular location is the nucleus. Its function is as follows. Inhibitor of actin polymerization. This is Heat shock protein beta-3 (HSPB3) from Bos taurus (Bovine).